A 449-amino-acid polypeptide reads, in one-letter code: Interferon-related developmental regulator 1 (449 aa).

Residues 1 to 10 (MPKNKKRNAP) are compositionally biased toward basic residues. A disordered region spans residues 1 to 41 (MPKNKKRNAPHRGGGGGGGSGAATSAATTGGPHRTVQPFSD). Over residues 12-21 (RGGGGGGGSG) the composition is skewed to gly residues. Over residues 22-31 (AATSAATTGG) the composition is skewed to low complexity.

It belongs to the IFRD family. In terms of assembly, interacts with PSIP1/LEDGF. In terms of tissue distribution, expressed at high levels in the embryonic brain in the period related to neuroblast proliferation and differentiation.

It is found in the cytoplasm. It localises to the cell membrane. The protein localises to the nucleus. In terms of biological role, probably participates in neurogenesis. Could play a role in regulating gene activity in the proliferative and/or differentiative pathways induced by NGF. This is Interferon-related developmental regulator 1 (Ifrd1) from Rattus norvegicus (Rat).